The chain runs to 301 residues: tRNA pseudouridine synthase B (301 aa).

Aspartate 48 acts as the Nucleophile in catalysis.

This sequence belongs to the pseudouridine synthase TruB family. Type 1 subfamily.

The catalysed reaction is uridine(55) in tRNA = pseudouridine(55) in tRNA. Responsible for synthesis of pseudouridine from uracil-55 in the psi GC loop of transfer RNAs. In Mycobacterium ulcerans (strain Agy99), this protein is tRNA pseudouridine synthase B.